Consider the following 331-residue polypeptide: MNFKKLPKIELHCHLDGSLRVDTILDIAKKDNIPLPSYNEKELINYVSIMDDCNSLDEYLNKFFIPNKVMQTKENLKRIAFELLEDVAADNVKYIEVRFAPLLHVEKGLNIEEIIESVLEGIKEAEKLYDIKGNLILGCMRNMDIPSAFEVVKKGAKFIGKGVVAIDLCGGEEPHFPGKYVEVLKLAKEYGYRITIHAGEAGVGENVLEAINLLNAERIGHGIYIKNCAEAYKLVKEKNIPLEVCPTSNLHTKAFESYETHPFMDFLKDDIKITINTDNMTVSNTTITKELEMLNKFCGLSIEDYKTIYLNSVEAAFTTKEAKKRLKKFVE.

Zn(2+) is bound by residues histidine 12 and histidine 14. Substrate contacts are provided by histidine 14, aspartate 16, and glycine 170. Histidine 197 contacts Zn(2+). Glutamate 200 (proton donor) is an active-site residue. Residue aspartate 278 coordinates Zn(2+).

Belongs to the metallo-dependent hydrolases superfamily. Adenosine and AMP deaminases family. Adenosine deaminase subfamily. Zn(2+) is required as a cofactor.

The enzyme catalyses adenosine + H2O + H(+) = inosine + NH4(+). It catalyses the reaction 2'-deoxyadenosine + H2O + H(+) = 2'-deoxyinosine + NH4(+). In terms of biological role, catalyzes the hydrolytic deamination of adenosine and 2-deoxyadenosine. The polypeptide is Adenosine deaminase (Clostridium botulinum (strain 657 / Type Ba4)).